A 478-amino-acid polypeptide reads, in one-letter code: UDP-N-acetylmuramate--L-alanine ligase (478 aa).

Residue 120–126 participates in ATP binding; sequence GSHGKTT.

This sequence belongs to the MurCDEF family.

It is found in the cytoplasm. The enzyme catalyses UDP-N-acetyl-alpha-D-muramate + L-alanine + ATP = UDP-N-acetyl-alpha-D-muramoyl-L-alanine + ADP + phosphate + H(+). It functions in the pathway cell wall biogenesis; peptidoglycan biosynthesis. Its function is as follows. Cell wall formation. This is UDP-N-acetylmuramate--L-alanine ligase from Rickettsia felis (strain ATCC VR-1525 / URRWXCal2) (Rickettsia azadi).